A 388-amino-acid polypeptide reads, in one-letter code: Dual-specificity RNA methyltransferase RlmN (388 aa).

The Proton acceptor role is filled by Glu-109. The Radical SAM core domain maps to 115-354; sequence EDDRATLCVS…TIVRKTRGDD (240 aa). Cys-122 and Cys-359 form a disulfide bridge. Residues Cys-129, Cys-133, and Cys-136 each contribute to the [4Fe-4S] cluster site. S-adenosyl-L-methionine contacts are provided by residues 183–184, Ser-215, 237–239, and Asn-316; these read GE and SLH. The active-site S-methylcysteine intermediate is the Cys-359.

This sequence belongs to the radical SAM superfamily. RlmN family. [4Fe-4S] cluster serves as cofactor.

The protein localises to the cytoplasm. The catalysed reaction is adenosine(2503) in 23S rRNA + 2 reduced [2Fe-2S]-[ferredoxin] + 2 S-adenosyl-L-methionine = 2-methyladenosine(2503) in 23S rRNA + 5'-deoxyadenosine + L-methionine + 2 oxidized [2Fe-2S]-[ferredoxin] + S-adenosyl-L-homocysteine. It carries out the reaction adenosine(37) in tRNA + 2 reduced [2Fe-2S]-[ferredoxin] + 2 S-adenosyl-L-methionine = 2-methyladenosine(37) in tRNA + 5'-deoxyadenosine + L-methionine + 2 oxidized [2Fe-2S]-[ferredoxin] + S-adenosyl-L-homocysteine. In terms of biological role, specifically methylates position 2 of adenine 2503 in 23S rRNA and position 2 of adenine 37 in tRNAs. m2A2503 modification seems to play a crucial role in the proofreading step occurring at the peptidyl transferase center and thus would serve to optimize ribosomal fidelity. This is Dual-specificity RNA methyltransferase RlmN from Cronobacter sakazakii (strain ATCC BAA-894) (Enterobacter sakazakii).